A 432-amino-acid chain; its full sequence is Ribosomal protein uS12 methylthiotransferase RimO (432 aa).

Positions 4–122 constitute an MTTase N-terminal domain; it reads NTIDIITLGC…LLADLGKAYK (119 aa). Residues cysteine 13, cysteine 51, cysteine 85, cysteine 146, cysteine 150, and cysteine 153 each coordinate [4Fe-4S] cluster. Positions 132-363 constitute a Radical SAM core domain; sequence TTPHHYAYLK…MALQQEIAGE (232 aa). In terms of domain architecture, TRAM spans 366–432; the sequence is QTKIGKEFKV…DDFDLYASIL (67 aa).

It belongs to the methylthiotransferase family. RimO subfamily. The cofactor is [4Fe-4S] cluster.

It localises to the cytoplasm. It catalyses the reaction L-aspartate(89)-[ribosomal protein uS12]-hydrogen + (sulfur carrier)-SH + AH2 + 2 S-adenosyl-L-methionine = 3-methylsulfanyl-L-aspartate(89)-[ribosomal protein uS12]-hydrogen + (sulfur carrier)-H + 5'-deoxyadenosine + L-methionine + A + S-adenosyl-L-homocysteine + 2 H(+). Its function is as follows. Catalyzes the methylthiolation of an aspartic acid residue of ribosomal protein uS12. The polypeptide is Ribosomal protein uS12 methylthiotransferase RimO (Phocaeicola vulgatus (strain ATCC 8482 / DSM 1447 / JCM 5826 / CCUG 4940 / NBRC 14291 / NCTC 11154) (Bacteroides vulgatus)).